The primary structure comprises 72 residues: High-potential iron-sulfur protein isozyme 1 (72 aa).

Residues Cys-34, Cys-37, Cys-51, and Cys-65 each contribute to the [4Fe-4S] cluster site.

This sequence belongs to the high-potential iron-sulfur protein (HiPIP) family. Homodimer.

In terms of biological role, specific class of high-redox-potential 4Fe-4S ferredoxins. Functions in anaerobic electron transport in most purple and in some other photosynthetic bacteria and in at least one genus (Paracoccus) of halophilic, denitrifying bacteria. This is High-potential iron-sulfur protein isozyme 1 (hip1) from Ectothiorhodospira shaposhnikovii (Ectothiorhodospira vacuolata).